Reading from the N-terminus, the 296-residue chain is Coatomer subunit epsilon (296 aa).

It belongs to the COPE family. Oligomeric complex that consists of at least the alpha, beta, beta', gamma, delta, epsilon and zeta subunits. Interacts with the ESCRT-0 subunit VPS27.

The protein resides in the cytoplasm. It is found in the golgi apparatus membrane. It localises to the cytoplasmic vesicle. The protein localises to the COPI-coated vesicle membrane. The coatomer is a cytosolic protein complex that binds to dilysine motifs and reversibly associates with Golgi non-clathrin-coated vesicles, which further mediate biosynthetic protein transport from the ER, via the Golgi up to the trans Golgi network. The coatomer complex is required for budding from Golgi membranes, and is essential for the retrograde Golgi-to-ER transport of dilysine-tagged proteins. The polypeptide is Coatomer subunit epsilon (SEC28) (Saccharomyces cerevisiae (strain ATCC 204508 / S288c) (Baker's yeast)).